A 663-amino-acid polypeptide reads, in one-letter code: Polyunsaturated fatty acid lipoxygenase ALOX12 (663 aa).

Positions glycine 2 to arginine 114 constitute a PLAT domain. The 549-residue stretch at leucine 115–isoleucine 663 folds into the Lipoxygenase domain. The residue at position 246 (serine 246) is a Phosphoserine. Fe cation-binding residues include histidine 360, histidine 365, histidine 540, asparagine 544, and isoleucine 663.

This sequence belongs to the lipoxygenase family. The cofactor is Fe cation. As to expression, expressed in vascular smooth muscle cells.

It is found in the cytoplasm. Its subcellular location is the cytosol. The protein resides in the membrane. The enzyme catalyses (5Z,8Z,11Z,14Z)-eicosatetraenoate + O2 = (12S)-hydroperoxy-(5Z,8Z,10E,14Z)-eicosatetraenoate. The catalysed reaction is (5Z,8Z,11Z,14Z)-eicosatetraenoate + O2 = (15S)-hydroperoxy-(5Z,8Z,11Z,13E)-eicosatetraenoate. It catalyses the reaction 2 leukotriene A4 + O2 + 2 H2O = 2 lipoxin A4. It carries out the reaction 2 leukotriene A4 + O2 + 2 H2O = 2 lipoxin B4. The enzyme catalyses (14S)-hydroperoxy-(4Z,7Z,10Z,12E,16Z,19Z)-docosahexaenoate = (13S,14S)-epoxy-(4Z,7Z,9E,11E,16Z,19Z)-docosahexaenoate + H2O. The catalysed reaction is N-(5Z,8Z,11Z,14Z)-eicosatetraenoyl-L-alanine + O2 = N-(15S)-hydroperoxy-(5Z,8Z,11Z,13E)-eicosatetraenoyl-alanine. It catalyses the reaction N-(5Z,8Z,11Z,14Z)-eicosatetraenoyl-L-alanine + O2 = N-(12S)-hydroperoxy-(5Z,8Z,10E,14Z)-eicosatetraenoyl-alanine. It carries out the reaction N-(5Z,8Z,11Z,14Z)-eicosatetraenoyl-gamma-aminobutanoate + O2 = N-(15S)-hydroperoxy-(5Z,8Z,11Z,13E)-eicosatetraenoyl-gamma-aminobutanoate. The enzyme catalyses N-(5Z,8Z,11Z,14Z)-eicosatetraenoyl-gamma-aminobutanoate + O2 = N-(12S)-hydroperoxy-(5Z,8Z,10E,14Z)-eicosatetraenoyl-gamma-aminobutanoate. The catalysed reaction is N-(5Z,8Z,11Z,14Z)-eicosatetraenoyl-glycine + O2 = N-(15S)-hydroperoxy-(5Z,8Z,11Z,13E)-eicosatetraenoyl-glycine. It catalyses the reaction N-(5Z,8Z,11Z,14Z)-eicosatetraenoyl-glycine + O2 = N-(12S)-hydroperoxy-(5Z,8Z,10E,14Z)-eicosatetraenoyl-glycine. It carries out the reaction N-(5Z,8Z,11Z,14Z)-eicosatetraenoyl-taurine + O2 = N-(12S)-hydroperoxy-(5Z,8Z,10E,14Z)-eicosatetraenoyl-taurine. The enzyme catalyses N-(5Z,8Z,11Z,14Z)-eicosatetraenoyl-taurine + O2 = N-(15S)-hydroperoxy-(5Z,8Z,11Z,13E)-eicosatetraenoyl-taurine. The catalysed reaction is (4Z,7Z,10Z,13Z,16Z,19Z)-docosahexaenoate + O2 = (14S)-hydroperoxy-(4Z,7Z,10Z,12E,16Z,19Z)-docosahexaenoate. It catalyses the reaction (7S)-hydroperoxy-(4Z,8E,10Z,13Z,16Z,19Z)-docosahexaenoate + O2 = (7S,14S)-dihydroperoxy-(4Z,8E,10Z,12E,16Z,19Z)-docosahexaenoate. It carries out the reaction (7S)-hydroperoxy-(4Z,8E,10Z,13Z,16Z,19Z)-docosahexaenoate + O2 = (7S,17S)-dihydroperoxy-(4Z,8E,10Z,13Z,15E,19Z)-docosahexaenoate. The enzyme catalyses (5Z,8Z,11Z,14Z,17Z)-eicosapentaenoate + O2 = (12S)-hydroperoxy-(5Z,8Z,10E,14Z,17Z)-eicosapentaenoate. The catalysed reaction is (8Z,11Z,14Z)-eicosatrienoate + O2 = (12S)-hydroperoxy-(8Z,10E,14Z)-eicosatrienoate. It catalyses the reaction (9Z,12Z)-octadecadienoate + O2 = (13S)-hydroperoxy-(9Z,11E)-octadecadienoate. It carries out the reaction (5Z,8Z,11Z)-eicosatrienoate + O2 = (12S)-hydroperoxy-(5Z,8Z,10E)-eicosatrienoate. The enzyme catalyses (14R,15S)-epoxy-(5Z,8Z,11Z)-eicosatrienoate + O2 = (12S)-hydroperoxy-(14R,15S)-epoxy-(5Z,8Z,10E)-eicosatrienoate. The catalysed reaction is (14S,15R)-epoxy-(5Z,8Z,11Z)-eicosatrienoate + O2 = (12S)-hydroperoxy-(14S,15R)-epoxy-(5Z,8Z,10E)-eicosatrienoate. Its pathway is lipid metabolism; hydroperoxy eicosatetraenoic acid biosynthesis. With respect to regulation, activated by EGF. Arachidonic acid conversion is inhibited by (13S,14S)-epoxy-(4Z,7Z,9E,11E,16Z,19Z)-docosahexaenoate (13S,14S-epoxy-DHA). Arachidonate 12-lipoxygenase activity is decreased when PH decreases from 7.4 to 6. Catalyzes the regio and stereo-specific incorporation of molecular oxygen into free and esterified polyunsaturated fatty acids generating lipid hydroperoxides that can be further reduced to the corresponding hydroxy species. Mainly converts arachidonate ((5Z,8Z,11Z,14Z)-eicosatetraenoate) to the specific bioactive lipid (12S)-hydroperoxyeicosatetraenoate/(12S)-HPETE. Through the production of bioactive lipids like (12S)-HPETE it regulates different biological processes including platelet activation. It can also catalyze the epoxidation of double bonds of polyunsaturated fatty acids such as (14S)-hydroperoxy-docosahexaenoate/(14S)-HPDHA resulting in the formation of (13S,14S)-epoxy-DHA. Furthermore, it may participate in the sequential oxidations of DHA ((4Z,7Z,10Z,13Z,16Z,19Z)-docosahexaenoate) to generate specialized pro-resolving mediators (SPMs) like resolvin D5 ((7S,17S)-diHPDHA) and (7S,14S)-diHPDHA, that actively down-regulate the immune response and have anti-aggregation properties with platelets. An additional function involves a multistep process by which it transforms leukotriene A4/LTA4 into the bioactive lipids lipoxin A4/LXA4 and lipoxin B4/LXB4, both are vasoactive and LXA4 may regulate neutrophil function via occupancy of specific recognition sites. Can also peroxidize linoleate ((9Z,12Z)-octadecadienoate) to (13S)-hydroperoxyoctadecadienoate/ (13S-HPODE). Due to its role in regulating both the expression of the vascular endothelial growth factor (VEGF, an angiogenic factor involved in the survival and metastasis of solid tumors) and the expression of integrin beta-1 (known to affect tumor cell migration and proliferation), it can be regarded as protumorigenic. Important for cell survival, as it may play a role not only in proliferation but also in the prevention of apoptosis in vascular smooth muscle cells. This Homo sapiens (Human) protein is Polyunsaturated fatty acid lipoxygenase ALOX12.